Consider the following 485-residue polypeptide: NADH-quinone oxidoreductase subunit N (485 aa).

14 helical membrane passes run 8 to 28 (LIALLPLLIVGLTVVVVMLGI), 35 to 55 (FINATLTVIGLNLALLSLYFV), 78 to 98 (GLVILASLATCTFAYPWLVGY), 104 to 124 (EFYLLVLIATLGGILLASANH), 125 to 145 (LASLFLGIELISLPLFGLVGY), 159 to 179 (YMLLSAAASSFLLFGMALLYA), 203 to 223 (VLAGMGMMIVGLGFKLSLVPF), 235 to 255 (PAPVSTFLATASKIAIFAVVM), 271 to 291 (MVLSIIAVCSILFGNLMAISQ), 297 to 317 (LLGYSSIAHLGYLLVALIAVQ), 327 to 347 (GVYLAGYLFSSLGAFGVVSLM), 374 to 394 (AVMTVMMLSLAGIPMTLGFIG), 408 to 427 (WWLTGAVVLGSAIGLYYYLR), and 449 to 469 (ALTAGGVVVLISAALVLLLGV).

It belongs to the complex I subunit 2 family. As to quaternary structure, NDH-1 is composed of 13 different subunits. Subunits NuoA, H, J, K, L, M, N constitute the membrane sector of the complex.

The protein localises to the cell inner membrane. It carries out the reaction a quinone + NADH + 5 H(+)(in) = a quinol + NAD(+) + 4 H(+)(out). NDH-1 shuttles electrons from NADH, via FMN and iron-sulfur (Fe-S) centers, to quinones in the respiratory chain. The immediate electron acceptor for the enzyme in this species is believed to be ubiquinone. Couples the redox reaction to proton translocation (for every two electrons transferred, four hydrogen ions are translocated across the cytoplasmic membrane), and thus conserves the redox energy in a proton gradient. The polypeptide is NADH-quinone oxidoreductase subunit N (Serratia proteamaculans (strain 568)).